Consider the following 184-residue polypeptide: Endothelial cell-specific molecule 1 (184 aa).

The signal sequence occupies residues 1 to 21 (MKSLLLLTTLLIPLHLGMAWS). In terms of domain architecture, IGFBP N-terminal spans 24–102 (YAVDCPEHCD…GDEFGVCKDC (79 aa)). Disulfide bonds link Cys-28–Cys-51, Cys-32–Cys-53, Cys-37–Cys-54, Cys-43–Cys-57, Cys-65–Cys-83, and Cys-77–Cys-99. The segment at 145-184 (RTSASQTERDAASGDGNAVREEIGDRNAARPSVMKWLNPR) is disordered. Basic and acidic residues predominate over residues 151–172 (TERDAASGDGNAVREEIGDRNA). A glycan (O-linked (Xyl...) (chondroitin sulfate) serine) is linked at Ser-157.

O-glycosylated; contains chondroitin sulfate and dermatan sulfate. In terms of tissue distribution, pineal gland specific.

Its subcellular location is the secreted. In terms of biological role, involved in angiogenesis; promotes angiogenic sprouting. May have potent implications in lung endothelial cell-leukocyte interactions. In Rattus norvegicus (Rat), this protein is Endothelial cell-specific molecule 1 (Esm1).